A 617-amino-acid chain; its full sequence is Kelch-like protein 9 (617 aa).

A BTB domain is found at 50–119; the sequence is CDVTLVPGDG…IYTAKLSLNM (70 aa). In terms of domain architecture, BACK spans 154–255; it reads CVEVGRIANT…TPQDLINYVQ (102 aa). Kelch repeat units follow at residues 299 to 347, 348 to 399, 400 to 446, 448 to 493, 495 to 545, and 546 to 594; these read HLVT…VIGN, FLYV…ALKG, HLYA…VYGG, MYIS…TVGD, LYVI…VFEN, and KIYV…TLTV. Positions 595 to 617 are disordered; that stretch reads FPPEENPGSPSRESPLSAPSDHS.

In terms of assembly, component of the BCR(KLHL9-KLHL13) E3 ubiquitin ligase complex, at least composed of CUL3, KLHL9, KLHL13 and RBX1. Interacts with AURKB.

It participates in protein modification; protein ubiquitination. Its function is as follows. Substrate-specific adapter of a BCR (BTB-CUL3-RBX1) E3 ubiquitin-protein ligase complex required for mitotic progression and cytokinesis. The BCR(KLHL9-KLHL13) E3 ubiquitin ligase complex mediates the ubiquitination of AURKB and controls the dynamic behavior of AURKB on mitotic chromosomes and thereby coordinates faithful mitotic progression and completion of cytokinesis. The sequence is that of Kelch-like protein 9 (Klhl9) from Mus musculus (Mouse).